Reading from the N-terminus, the 200-residue chain is Probable GTP-binding protein EngB (200 aa).

In terms of domain architecture, EngB-type G spans 22–197 (DLPEIAFAGR…WQAIQDAVEE (176 aa)). GTP contacts are provided by residues 30 to 37 (GRSNVGKS), 57 to 61 (GRTQL), 78 to 81 (DLPG), 145 to 148 (TKCD), and 176 to 178 (FSA). Residues Ser37 and Thr59 each coordinate Mg(2+).

The protein belongs to the TRAFAC class TrmE-Era-EngA-EngB-Septin-like GTPase superfamily. EngB GTPase family. It depends on Mg(2+) as a cofactor.

Necessary for normal cell division and for the maintenance of normal septation. The chain is Probable GTP-binding protein EngB from Trichlorobacter lovleyi (strain ATCC BAA-1151 / DSM 17278 / SZ) (Geobacter lovleyi).